The sequence spans 418 residues: Light-independent protochlorophyllide reductase subunit N (418 aa).

Positions 17, 42, and 103 each coordinate [4Fe-4S] cluster.

Belongs to the BchN/ChlN family. In terms of assembly, protochlorophyllide reductase is composed of three subunits; ChlL, ChlN and ChlB. Forms a heterotetramer of two ChlB and two ChlN subunits. Requires [4Fe-4S] cluster as cofactor.

The catalysed reaction is chlorophyllide a + oxidized 2[4Fe-4S]-[ferredoxin] + 2 ADP + 2 phosphate = protochlorophyllide a + reduced 2[4Fe-4S]-[ferredoxin] + 2 ATP + 2 H2O. The protein operates within porphyrin-containing compound metabolism; chlorophyll biosynthesis (light-independent). Its function is as follows. Component of the dark-operative protochlorophyllide reductase (DPOR) that uses Mg-ATP and reduced ferredoxin to reduce ring D of protochlorophyllide (Pchlide) to form chlorophyllide a (Chlide). This reaction is light-independent. The NB-protein (ChlN-ChlB) is the catalytic component of the complex. This is Light-independent protochlorophyllide reductase subunit N from Prochlorococcus marinus (strain MIT 9515).